The sequence spans 1167 residues: ATP-dependent helicase/nuclease subunit A (1167 aa).

Residues 2–451 (KNWTAEQMRA…IELSLNFRSR (450 aa)) form the UvrD-like helicase ATP-binding domain. Residue 23-30 (AAAGAGKT) participates in ATP binding. The UvrD-like helicase C-terminal domain maps to 478–768 (KAFLKKGADY…RVMSVHKSKG (291 aa)).

This sequence belongs to the helicase family. AddA subfamily. In terms of assembly, heterodimer of AddA and AddB/RexB. Mg(2+) serves as cofactor.

The catalysed reaction is Couples ATP hydrolysis with the unwinding of duplex DNA by translocating in the 3'-5' direction.. It carries out the reaction ATP + H2O = ADP + phosphate + H(+). Its function is as follows. The heterodimer acts as both an ATP-dependent DNA helicase and an ATP-dependent, dual-direction single-stranded exonuclease. Recognizes the chi site generating a DNA molecule suitable for the initiation of homologous recombination. The AddA nuclease domain is required for chi fragment generation; this subunit has the helicase and 3' -&gt; 5' nuclease activities. This is ATP-dependent helicase/nuclease subunit A from Carboxydothermus hydrogenoformans (strain ATCC BAA-161 / DSM 6008 / Z-2901).